The sequence spans 307 residues: Elongation factor Ts (307 aa).

An involved in Mg(2+) ion dislocation from EF-Tu region spans residues 79–82 (TDFV).

The protein belongs to the EF-Ts family.

The protein resides in the cytoplasm. Functionally, associates with the EF-Tu.GDP complex and induces the exchange of GDP to GTP. It remains bound to the aminoacyl-tRNA.EF-Tu.GTP complex up to the GTP hydrolysis stage on the ribosome. The polypeptide is Elongation factor Ts (Sinorhizobium medicae (strain WSM419) (Ensifer medicae)).